A 494-amino-acid chain; its full sequence is Cobyric acid synthase (494 aa).

The GATase cobBQ-type domain maps to 248–445 (ELEIAVLKLP…LHGIFDNGPW (198 aa)). Residue Cys-329 is the Nucleophile of the active site. His-437 is a catalytic residue.

It belongs to the CobB/CobQ family. CobQ subfamily.

The protein operates within cofactor biosynthesis; adenosylcobalamin biosynthesis. In terms of biological role, catalyzes amidations at positions B, D, E, and G on adenosylcobyrinic A,C-diamide. NH(2) groups are provided by glutamine, and one molecule of ATP is hydrogenolyzed for each amidation. In Synechococcus sp. (strain WH7803), this protein is Cobyric acid synthase.